The primary structure comprises 252 residues: Ribosome assembly factor mrt4 (252 aa).

This sequence belongs to the universal ribosomal protein uL10 family. In terms of assembly, associates with the pre-60S ribosomal particle.

The protein resides in the nucleus. It is found in the nucleolus. It localises to the cytoplasm. Its function is as follows. Component of the ribosome assembly machinery. Nuclear paralog of the ribosomal protein P0, it binds pre-60S subunits at an early stage of assembly in the nucleolus, and is replaced by P0 in cytoplasmic pre-60S subunits and mature 80S ribosomes. The polypeptide is Ribosome assembly factor mrt4 (Neurospora crassa (strain ATCC 24698 / 74-OR23-1A / CBS 708.71 / DSM 1257 / FGSC 987)).